The chain runs to 156 residues: Cyanate hydratase (156 aa).

Residues Arg96, Glu99, and Ser122 contribute to the active site.

Belongs to the cyanase family.

It carries out the reaction cyanate + hydrogencarbonate + 3 H(+) = NH4(+) + 2 CO2. Catalyzes the reaction of cyanate with bicarbonate to produce ammonia and carbon dioxide. The protein is Cyanate hydratase of Escherichia coli O9:H4 (strain HS).